Here is a 1701-residue protein sequence, read N- to C-terminus: Rho guanine nucleotide exchange factor TIAM2 (1701 aa).

Disordered stretches follow at residues 1 to 21 (MGNSDSQYTLQGSKNHSNTIT), 201 to 250 (SPTL…SSWY), 265 to 293 (GSFLAPGMPDPSLHASFPPGDAKKPFNQS), and 389 to 417 (SLSRKKRKLQEPRSKEGSDYFDSRSDGLN). Glycine 2 carries N-myristoyl glycine lipidation. A compositionally biased stretch (low complexity) spans 238-248 (SKGSSLSSESS). The span at 397 to 413 (LQEPRSKEGSDYFDSRS) shows a compositional bias: basic and acidic residues. A PH 1 domain is found at 506–620 (VVRKAGWLFF…WVTAVHSACA (115 aa)). Residues 628–695 (GKEDTLRLLK…KFHMDLFRMR (68 aa)) are a coiled coil. One can recognise an RBD domain in the interval 810-881 (IQTYVHFQDN…YMQQQVYDEI (72 aa)). Positions 890–976 (DVQLTKTGSV…GLTLIARPPD (87 aa)) constitute a PDZ domain. Residues 1070–1092 (DSQANGMEGPRENQDPPPRSLAR) form a disordered region. The 195-residue stretch at 1099–1293 (RLRKVIQELV…EKVASHINEM (195 aa)) folds into the DH domain. The PH 2 domain maps to 1347-1478 (DLELTVFVFK…EKTCKDRLVP (132 aa)). Disordered stretches follow at residues 1500-1556 (NSSS…GLAD) and 1568-1628 (LSDE…PKLV). Low complexity predominate over residues 1513–1527 (GTLLDSDEGSLSSGT). Serine 1583 is modified (phosphoserine). A compositionally biased stretch (basic and acidic residues) spans 1596–1607 (RISEDPDVHPEA). The residue at position 1648 (threonine 1648) is a Phosphothreonine.

Belongs to the TIAM family. As to quaternary structure, interacts with MAP1A, MAP1B, PARP1 and YWHAE. Interacts with CD44, PARD3 and MAPK8IP2. Phosphorylated on serine and threonine residues. Phosphorylated on Thr-1648 by Rho-kinase. Its phosphorylation by Rho-kinase inhibits its guanine nucleotide exchange activity, its interaction with MAP1A, MAP1B, PARP1 and YWHAE and reduces its ability to promote neurite growth. Expressed in the occipital, frontal and temporal lobes, cerebellum, putamen and testis.

The protein localises to the cytoplasm. It is found in the cell projection. Its subcellular location is the lamellipodium. The protein resides in the filopodium. It localises to the growth cone. The protein localises to the neuron projection. It is found in the perikaryon. Its function is as follows. Modulates the activity of RHO-like proteins and connects extracellular signals to cytoskeletal activities. Acts as a GDP-dissociation stimulator protein that stimulates the GDP-GTP exchange activity of RHO-like GTPases and activates them. Mediates extracellular laminin signals to activate Rac1, contributing to neurite growth. Involved in lamellipodial formation and advancement of the growth cone of embryonic hippocampal neurons. Promotes migration of neurons in the cerebral cortex. When overexpressed, induces membrane ruffling accompanied by the accumulation of actin filaments along the altered plasma membrane. Activates specifically RAC1, but not CDC42 and RHOA. This Homo sapiens (Human) protein is Rho guanine nucleotide exchange factor TIAM2 (TIAM2).